Consider the following 349-residue polypeptide: Probable dual-specificity RNA methyltransferase RlmN (349 aa).

The active-site Proton acceptor is the Glu-94. Positions 100–321 (DEDRATLCVS…TQHGVFATIR (222 aa)) constitute a Radical SAM core domain. A disulfide bridge connects residues Cys-107 and Cys-332. Residues Cys-114, Cys-118, and Cys-121 each coordinate [4Fe-4S] cluster. Residues 159–160 (GE), Ser-191, 213–215 (SMH), and His-289 contribute to the S-adenosyl-L-methionine site. Cys-332 serves as the catalytic S-methylcysteine intermediate.

Belongs to the radical SAM superfamily. RlmN family. Requires [4Fe-4S] cluster as cofactor.

The protein resides in the cytoplasm. It catalyses the reaction adenosine(2503) in 23S rRNA + 2 reduced [2Fe-2S]-[ferredoxin] + 2 S-adenosyl-L-methionine = 2-methyladenosine(2503) in 23S rRNA + 5'-deoxyadenosine + L-methionine + 2 oxidized [2Fe-2S]-[ferredoxin] + S-adenosyl-L-homocysteine. It carries out the reaction adenosine(37) in tRNA + 2 reduced [2Fe-2S]-[ferredoxin] + 2 S-adenosyl-L-methionine = 2-methyladenosine(37) in tRNA + 5'-deoxyadenosine + L-methionine + 2 oxidized [2Fe-2S]-[ferredoxin] + S-adenosyl-L-homocysteine. In terms of biological role, specifically methylates position 2 of adenine 2503 in 23S rRNA and position 2 of adenine 37 in tRNAs. The sequence is that of Probable dual-specificity RNA methyltransferase RlmN from Phocaeicola vulgatus (strain ATCC 8482 / DSM 1447 / JCM 5826 / CCUG 4940 / NBRC 14291 / NCTC 11154) (Bacteroides vulgatus).